We begin with the raw amino-acid sequence, 123 residues long: Transmembrane protein 80 (123 aa).

The next 4 membrane-spanning stretches (helical) occupy residues 2 to 22, 35 to 55, 68 to 88, and 102 to 122; these read LFHL…LMIV, LALD…QLYL, LAAS…FLLW, and VLLV…ADFI.

It localises to the membrane. The protein resides in the cell projection. It is found in the cilium. The polypeptide is Transmembrane protein 80 (Tmem80) (Mus musculus (Mouse)).